The chain runs to 179 residues: Large ribosomal subunit protein uL5 (179 aa).

It belongs to the universal ribosomal protein uL5 family. As to quaternary structure, part of the 50S ribosomal subunit; part of the 5S rRNA/L5/L18/L25 subcomplex. Contacts the 5S rRNA and the P site tRNA. Forms a bridge to the 30S subunit in the 70S ribosome.

Functionally, this is one of the proteins that bind and probably mediate the attachment of the 5S RNA into the large ribosomal subunit, where it forms part of the central protuberance. In the 70S ribosome it contacts protein S13 of the 30S subunit (bridge B1b), connecting the 2 subunits; this bridge is implicated in subunit movement. Contacts the P site tRNA; the 5S rRNA and some of its associated proteins might help stabilize positioning of ribosome-bound tRNAs. This is Large ribosomal subunit protein uL5 from Hamiltonella defensa subsp. Acyrthosiphon pisum (strain 5AT).